The primary structure comprises 412 residues: Class E basic helix-loop-helix protein 40 (412 aa).

A disordered region spans residues 1–21; sequence MERIPSAQPPPTCLPKAPGLE. Residues 1 to 139 are essential for interaction with BMAL1, E-box binding and repressor activity against the CLOCK-BMAL1 heterodimer; the sequence is MERIPSAQPP…LSGRNVEAGQ (139 aa). The 56-residue stretch at 52 to 107 folds into the bHLH domain; the sequence is TYKLPHRLIEKKRRDRINECIAQLKDLLPEHLKLTTLGHLEKAVVLELTLKHVKAL. Residues 75-79 are necessary for interaction with RXRA and repressor activity against RXRA; that stretch reads LKDLL. The Orange domain occupies 142 to 175; sequence FCSGFQTCAREVLQYLAKHENTRDLKSSQLVTHL. Residue Lys-159 forms a Glycyl lysine isopeptide (Lys-Gly) (interchain with G-Cter in SUMO1, SUMO2 and SUMO3) linkage. Lys-167 is covalently cross-linked (Glycyl lysine isopeptide (Lys-Gly) (interchain with G-Cter in SUMO2)). Disordered regions lie at residues 182 to 257 and 279 to 298; these read LLQG…LRVE and KQES…SDDE. Phosphoserine is present on Ser-235. Residues 248-257 show a composition bias toward basic and acidic residues; that stretch reads ESEKSELRVE. Lys-279 is covalently cross-linked (Glycyl lysine isopeptide (Lys-Gly) (interchain with G-Cter in SUMO1); alternate). Lys-279 participates in a covalent cross-link: Glycyl lysine isopeptide (Lys-Gly) (interchain with G-Cter in SUMO1, SUMO2 and SUMO3); alternate. Lys-279 is covalently cross-linked (Glycyl lysine isopeptide (Lys-Gly) (interchain with G-Cter in SUMO2); alternate). Residue Lys-288 forms a Glycyl lysine isopeptide (Lys-Gly) (interchain with G-Cter in SUMO2) linkage. At Ser-383 the chain carries Phosphoserine.

Homodimer. Heterodimer with BHLHE41/DEC2. Interacts with TCF3/E47. Interacts with ubiquitin-conjugating enzyme UBE2I/UBC9. Interacts with HDAC1, SUMO1, RXRA and BMAL1. Post-translationally, ubiquitinated; which may lead to proteasomal degradation. In terms of processing, sumoylation inhibits its ubiquitination and promotes its negative regulation of the CLOCK-BMAL1 heterodimer transcriptional activator activity.

Its subcellular location is the cytoplasm. The protein resides in the nucleus. Functionally, transcriptional repressor involved in the regulation of the circadian rhythm by negatively regulating the activity of the clock genes and clock-controlled genes. Acts as the negative limb of a novel autoregulatory feedback loop (DEC loop) which differs from the one formed by the PER and CRY transcriptional repressors (PER/CRY loop). Both these loops are interlocked as it represses the expression of PER1/2 and in turn is repressed by PER1/2 and CRY1/2. Represses the activity of the circadian transcriptional activator: CLOCK-BMAL1|BMAL2 heterodimer by competing for the binding to E-box elements (5'-CACGTG-3') found within the promoters of its target genes. Negatively regulates its own expression and the expression of DBP and BHLHE41/DEC2. Acts as a corepressor of RXR and the RXR-LXR heterodimers and represses the ligand-induced RXRA and NR1H3/LXRA transactivation activity. May be involved in the regulation of chondrocyte differentiation via the cAMP pathway. Represses the transcription of NR0B2 and attentuates the transactivation of NR0B2 by the CLOCK-BMAL1 complex. Drives the circadian rhythm of blood pressure through transcriptional repression of ATP1B1 in the cardiovascular system. This chain is Class E basic helix-loop-helix protein 40 (BHLHE40), found in Ovis aries (Sheep).